The chain runs to 187 residues: GTP cyclohydrolase 1 (187 aa).

Zn(2+)-binding residues include Cys79, His82, and Cys150.

It belongs to the GTP cyclohydrolase I family. As to quaternary structure, toroid-shaped homodecamer, composed of two pentamers of five dimers.

The catalysed reaction is GTP + H2O = 7,8-dihydroneopterin 3'-triphosphate + formate + H(+). It functions in the pathway cofactor biosynthesis; 7,8-dihydroneopterin triphosphate biosynthesis; 7,8-dihydroneopterin triphosphate from GTP: step 1/1. The chain is GTP cyclohydrolase 1 from Fusobacterium nucleatum subsp. nucleatum (strain ATCC 25586 / DSM 15643 / BCRC 10681 / CIP 101130 / JCM 8532 / KCTC 2640 / LMG 13131 / VPI 4355).